Consider the following 800-residue polypeptide: Putative antiporter subunit mnhA2 (800 aa).

21 helical membrane-spanning segments follow: residues 1-21 (MSLV…LFTL), 29-49 (VAGY…IMKI), 78-98 (GLSL…FFYA), 109-129 (LPRF…IVIA), 133-153 (ILMY…ISYW), 167-187 (FMIT…LYII), 209-229 (FIPM…QFPF), 241-261 (TPVS…FLLF), 272-292 (VYIY…SLTA), 300-320 (GILA…VGLG), 336-356 (ILVL…KCAL), 387-407 (IVML…GFLS), 424-444 (YGFV…ILTF), 472-492 (PWLF…IFFV), 528-548 (VNLP…LALV), 595-615 (IMIT…TVGF), 627-647 (GPLE…LIFI), 651-671 (LTMV…FIAM), 676-696 (LALT…VSFS), 712-732 (TFKI…IFVA), and 768-788 (LDTM…YTLL).

Belongs to the CPA3 antiporters (TC 2.A.63) subunit A family. As to quaternary structure, may form a heterooligomeric complex that consists of seven subunits: mnhA2, mnhB2, mnhC2, mnhD2, mnhE2, mnhF2 and mnhG2.

It is found in the cell membrane. The protein is Putative antiporter subunit mnhA2 (mnhA2) of Staphylococcus epidermidis (strain ATCC 12228 / FDA PCI 1200).